The primary structure comprises 244 residues: tRNA (guanine-N(1)-)-methyltransferase (244 aa).

S-adenosyl-L-methionine contacts are provided by residues Gly113 and 133 to 138 (IGDYVL).

Belongs to the RNA methyltransferase TrmD family. In terms of assembly, homodimer.

It localises to the cytoplasm. It catalyses the reaction guanosine(37) in tRNA + S-adenosyl-L-methionine = N(1)-methylguanosine(37) in tRNA + S-adenosyl-L-homocysteine + H(+). Specifically methylates guanosine-37 in various tRNAs. The sequence is that of tRNA (guanine-N(1)-)-methyltransferase from Bacillus cereus (strain B4264).